Here is a 308-residue protein sequence, read N- to C-terminus: Serine/threonine-protein phosphatase PP1 (308 aa).

Asp64, His66, Asp92, and Asn124 together coordinate Mn(2+). Catalysis depends on His125, which acts as the Proton donor. Residues His173 and His248 each contribute to the Mn(2+) site.

It belongs to the PPP phosphatase family. PP-1 subfamily. It depends on Mn(2+) as a cofactor.

The protein localises to the cytoplasm. It carries out the reaction O-phospho-L-seryl-[protein] + H2O = L-seryl-[protein] + phosphate. The enzyme catalyses O-phospho-L-threonyl-[protein] + H2O = L-threonyl-[protein] + phosphate. This is Serine/threonine-protein phosphatase PP1 (pph-3) from Neurospora crassa (strain ATCC 24698 / 74-OR23-1A / CBS 708.71 / DSM 1257 / FGSC 987).